A 334-amino-acid chain; its full sequence is Beta-hexosaminidase (334 aa).

Residues D57, R65, R128, and 158 to 159 each bind substrate; that span reads KH. The active-site Proton donor/acceptor is H171. D242 functions as the Nucleophile in the catalytic mechanism.

This sequence belongs to the glycosyl hydrolase 3 family. NagZ subfamily.

The protein resides in the cytoplasm. The enzyme catalyses Hydrolysis of terminal non-reducing N-acetyl-D-hexosamine residues in N-acetyl-beta-D-hexosaminides.. The protein operates within cell wall biogenesis; peptidoglycan recycling. Functionally, plays a role in peptidoglycan recycling by cleaving the terminal beta-1,4-linked N-acetylglucosamine (GlcNAc) from peptide-linked peptidoglycan fragments, giving rise to free GlcNAc, anhydro-N-acetylmuramic acid and anhydro-N-acetylmuramic acid-linked peptides. The polypeptide is Beta-hexosaminidase (Methylococcus capsulatus (strain ATCC 33009 / NCIMB 11132 / Bath)).